A 231-amino-acid chain; its full sequence is RING finger protein 141 (231 aa).

Gly-2 is lipidated: N-myristoyl glycine. The segment at Cys-156 to Arg-193 adopts an RING-type zinc-finger fold.

It is found in the membrane. Functionally, may be involved in spermatogenesis. The sequence is that of RING finger protein 141 (RNF141) from Canis lupus familiaris (Dog).